We begin with the raw amino-acid sequence, 213 residues long: Holliday junction branch migration complex subunit RuvA (213 aa).

Residues 1 to 63 form a domain I region; the sequence is MISFLRGTVA…EDSMTLFGFA (63 aa). Residues 64 to 140 are domain II; it reads DDDEREVFEV…LVPHGTAPAA (77 aa). The segment at 140 to 144 is flexible linker; that stretch reads AATTA. Positions 145–213 are domain III; that stretch reads AEASWKPQVV…RAGNRVGSRG (69 aa).

This sequence belongs to the RuvA family. In terms of assembly, homotetramer. Forms an RuvA(8)-RuvB(12)-Holliday junction (HJ) complex. HJ DNA is sandwiched between 2 RuvA tetramers; dsDNA enters through RuvA and exits via RuvB. An RuvB hexamer assembles on each DNA strand where it exits the tetramer. Each RuvB hexamer is contacted by two RuvA subunits (via domain III) on 2 adjacent RuvB subunits; this complex drives branch migration. In the full resolvosome a probable DNA-RuvA(4)-RuvB(12)-RuvC(2) complex forms which resolves the HJ.

It is found in the cytoplasm. In terms of biological role, the RuvA-RuvB-RuvC complex processes Holliday junction (HJ) DNA during genetic recombination and DNA repair, while the RuvA-RuvB complex plays an important role in the rescue of blocked DNA replication forks via replication fork reversal (RFR). RuvA specifically binds to HJ cruciform DNA, conferring on it an open structure. The RuvB hexamer acts as an ATP-dependent pump, pulling dsDNA into and through the RuvAB complex. HJ branch migration allows RuvC to scan DNA until it finds its consensus sequence, where it cleaves and resolves the cruciform DNA. The polypeptide is Holliday junction branch migration complex subunit RuvA (Pseudarthrobacter chlorophenolicus (strain ATCC 700700 / DSM 12829 / CIP 107037 / JCM 12360 / KCTC 9906 / NCIMB 13794 / A6) (Arthrobacter chlorophenolicus)).